A 108-amino-acid polypeptide reads, in one-letter code: PTS system galactose-specific EIIB component (108 aa).

The 106-residue stretch at 3 to 108 (DKVIALACAA…VLAAAENLMN (106 aa)) folds into the PTS EIIB type-3 domain. Cys-10 functions as the Phosphocysteine intermediate in the catalytic mechanism. Position 10 is a phosphocysteine; by EIIA (Cys-10).

The catalysed reaction is N(pros)-phospho-L-histidyl-[protein] + D-galactose(out) = D-galactose 6-phosphate(in) + L-histidyl-[protein]. Its function is as follows. The phosphoenolpyruvate-dependent sugar phosphotransferase system (sugar PTS), a major carbohydrate active transport system, catalyzes the phosphorylation of incoming sugar substrates concomitantly with their translocation across the cell membrane. Involved in galactose transport with PtcA and Lmg_0963. The polypeptide is PTS system galactose-specific EIIB component (Lactococcus lactis subsp. cremoris (strain MG1363)).